Consider the following 208-residue polypeptide: Large ribosomal subunit protein uL4 (208 aa).

A disordered region spans residues Arg-44–Ile-89. The span at Gly-60–Gly-71 shows a compositional bias: basic residues.

This sequence belongs to the universal ribosomal protein uL4 family. As to quaternary structure, part of the 50S ribosomal subunit.

In terms of biological role, one of the primary rRNA binding proteins, this protein initially binds near the 5'-end of the 23S rRNA. It is important during the early stages of 50S assembly. It makes multiple contacts with different domains of the 23S rRNA in the assembled 50S subunit and ribosome. Functionally, forms part of the polypeptide exit tunnel. This Chlorobium phaeobacteroides (strain BS1) protein is Large ribosomal subunit protein uL4.